Here is a 453-residue protein sequence, read N- to C-terminus: Venom prothrombin activator notecarin-D2 (453 aa).

Residues 1–20 form the signal peptide; sequence MAPQLLLCLILTFLWSLPEA. Residues 21 to 40 constitute a propeptide that is removed on maturation; that stretch reads ESNVFLKSKVANRFLQRTKR. Residues 41-86 enclose the Gla domain; sequence SNSLFEEIRPGNIERECIEEKCSKEEAREVFEDNEKTETFWNVYVD. 4-carboxyglutamate occurs at positions 46, 47, 54, 56, 59, 60, 65, 66, 69, 72, and 75. A disulfide bond links Cys57 and Cys62. The 37-residue stretch at 86–122 folds into the EGF-like 1; calcium-binding domain; it reads DGDQCSSNPCHYRGTCKDGIGSYTCTCLPNYEGKNCE. Intrachain disulfides connect Cys90–Cys101, Cys95–Cys110, Cys112–Cys121, Cys129–Cys140, Cys136–Cys149, Cys151–Cys164, Cys172–Cys326, Cys216–Cys221, Cys236–Cys252, Cys374–Cys388, and Cys399–Cys427. Ser92 carries an O-linked (Hex...) serine glycan. The EGF-like 2 domain occupies 129 to 164; it reads CRAFNGNCWHFCKRVQSETQCSCAESYLLGVDGHSC. Residues 182–209 constitute a propeptide, activation peptide; it reads REASLPDFVQSQKATVLKKSDNPSPDIR. Residues 210–451 form the Peptidase S1 domain; sequence IVNGMDCKLG…FIPWIKKIMS (242 aa). Catalysis depends on His251, which acts as the Charge relay system. The N-linked (GlcNAc...) asparagine glycan is linked to Asn254. Asp306 functions as the Charge relay system in the catalytic mechanism. The active-site Charge relay system is Ser403.

It belongs to the peptidase S1 family. Snake venom subfamily. As to quaternary structure, heterodimer of a light chain and a heavy chain; disulfide-linked. Post-translationally, gamma-carboxyglutamate residues are formed by vitamin K dependent carboxylation. These residues are essential for the binding of calcium. As to expression, expressed by the venom gland.

The protein localises to the secreted. The catalysed reaction is Selective cleavage of Arg-|-Thr and then Arg-|-Ile bonds in prothrombin to form thrombin.. Snake prothrombin activator that attacks the hemostatic system of prey. This protein is functionally similar to blood coagulation factor Xa. The polypeptide is Venom prothrombin activator notecarin-D2 (Notechis scutatus scutatus (Mainland tiger snake)).